Here is a 63-residue protein sequence, read N- to C-terminus: Small integral membrane protein 43 (63 aa).

Important for interaction with SLC2A1 and SLC2A3 regions lie at residues 7 to 29 and 51 to 57; these read LLLYLALFFFLLFLLFLLLFVVI and HREPWGF. Residues 9 to 29 traverse the membrane as a helical segment; that stretch reads LYLALFFFLLFLLFLLLFVVI.

Interacts with glucose transporters SLC2A1/GLUT1 and SLC2A3/GLUT3; the interactions may promote SLC2A1- and SLC2A3-mediated glucose transport to meet the energy needs of mesendoderm differentiation. As to expression, accumulates in the posterior primitive streak of mid-gastrulation embryos at 7.0 dpc. In the adult, highly abundant and enriched in the brain compared to other organs.

It is found in the cell membrane. Functionally, required for mesendoderm differentiation. Interacts with glucose transporters and promotes glucose uptake. Probably augments the glucose uptake capacity of glucose transporter proteins to meet the energy needs of mesendoderm differentiation. This Mus musculus (Mouse) protein is Small integral membrane protein 43.